We begin with the raw amino-acid sequence, 299 residues long: 4-diphosphocytidyl-2-C-methyl-D-erythritol kinase (299 aa).

The active site involves K22. 108–118 (PVGAGLGGGSS) is an ATP binding site. D150 is a catalytic residue.

Belongs to the GHMP kinase family. IspE subfamily.

The catalysed reaction is 4-CDP-2-C-methyl-D-erythritol + ATP = 4-CDP-2-C-methyl-D-erythritol 2-phosphate + ADP + H(+). The protein operates within isoprenoid biosynthesis; isopentenyl diphosphate biosynthesis via DXP pathway; isopentenyl diphosphate from 1-deoxy-D-xylulose 5-phosphate: step 3/6. In terms of biological role, catalyzes the phosphorylation of the position 2 hydroxy group of 4-diphosphocytidyl-2C-methyl-D-erythritol. The polypeptide is 4-diphosphocytidyl-2-C-methyl-D-erythritol kinase (Desulfotalea psychrophila (strain LSv54 / DSM 12343)).